Consider the following 120-residue polypeptide: MSIELRTKYGQIDISNEVIAMVAGGAAVDCYGIVGMASKNQIKDGLTEILRKENFSRGVQVRQEGEQIHIDMYIIVSYGTKISEVAHNVQTKVKYTVNQTIGLAVDSVNIYVQGVRVTNP.

Belongs to the asp23 family.

This is an uncharacterized protein from Bacillus subtilis (strain 168).